We begin with the raw amino-acid sequence, 179 residues long: Replication restart protein DnaT (179 aa).

The interval 1–83 (MSSRILTSHF…FEEPAAAPVA (83 aa)) is required for trimerization and to bind PriB. The binds ssDNA stretch occupies residues 84 to 179 (VPMGKFAMYA…DSHIPRGFRG (96 aa)). The disordered stretch occupies residues 151-179 (SRASNGGQPKRDVNSVSEPDSHIPRGFRG). A compositionally biased stretch (basic and acidic residues) spans 159 to 173 (PKRDVNSVSEPDSHI).

The protein belongs to the DnaT family. In terms of assembly, homotrimer. Interacts with PriB. Interacts with PriC. Component of the replication restart primosome. Primosome assembly occurs via a 'hand-off' mechanism. PriA binds to replication forks, subsequently PriB then DnaT bind; DnaT then displaces ssDNA to generate the helicase loading substrate.

Its function is as follows. Involved in the restart of stalled replication forks, which reloads the replicative helicase on sites other than the origin of replication. Can function in multiple replication restart pathways. Displaces ssDNA from a PriB-ssDNA complex. Probably forms a spiral filament on ssDNA. Functionally, binds single-stranded (ss)DNA. The minimal binding site is about 26 +/- 2 nucleotides (nt) per trimer. Two DNA-protein complexes are seen with 55 nt-long ssDNA. In Klebsiella pneumoniae subsp. pneumoniae (strain ATCC 700721 / MGH 78578), this protein is Replication restart protein DnaT.